The chain runs to 227 residues: Cytochrome c oxidase subunit 2 (227 aa).

Topologically, residues 1 to 14 (MAYPFQLGLQDATS) are mitochondrial intermembrane. Residues 15–45 (PIMEELLHFHDHTLMIVFLISSLVLYIISLM) form a helical membrane-spanning segment. Residues 46 to 59 (LTTKLTHTSTMDAQ) lie on the Mitochondrial matrix side of the membrane. A helical transmembrane segment spans residues 60–87 (EVETVWTILPAIILILIALPSLRILYMM). The Mitochondrial intermembrane portion of the chain corresponds to 88-227 (DEINNPSLTV…YFETWSALMV (140 aa)). Cu cation-binding residues include His-161, Cys-196, Glu-198, Cys-200, His-204, and Met-207. Glu-198 is a binding site for Mg(2+). Residue Tyr-218 is modified to Phosphotyrosine.

The protein belongs to the cytochrome c oxidase subunit 2 family. As to quaternary structure, component of the cytochrome c oxidase (complex IV, CIV), a multisubunit enzyme composed of 14 subunits. The complex is composed of a catalytic core of 3 subunits MT-CO1, MT-CO2 and MT-CO3, encoded in the mitochondrial DNA, and 11 supernumerary subunits COX4I, COX5A, COX5B, COX6A, COX6B, COX6C, COX7A, COX7B, COX7C, COX8 and NDUFA4, which are encoded in the nuclear genome. The complex exists as a monomer or a dimer and forms supercomplexes (SCs) in the inner mitochondrial membrane with NADH-ubiquinone oxidoreductase (complex I, CI) and ubiquinol-cytochrome c oxidoreductase (cytochrome b-c1 complex, complex III, CIII), resulting in different assemblies (supercomplex SCI(1)III(2)IV(1) and megacomplex MCI(2)III(2)IV(2)). Found in a complex with TMEM177, COA6, COX18, COX20, SCO1 and SCO2. Interacts with TMEM177 in a COX20-dependent manner. Interacts with COX20. Interacts with COX16. Requires Cu cation as cofactor.

The protein localises to the mitochondrion inner membrane. It carries out the reaction 4 Fe(II)-[cytochrome c] + O2 + 8 H(+)(in) = 4 Fe(III)-[cytochrome c] + 2 H2O + 4 H(+)(out). Its function is as follows. Component of the cytochrome c oxidase, the last enzyme in the mitochondrial electron transport chain which drives oxidative phosphorylation. The respiratory chain contains 3 multisubunit complexes succinate dehydrogenase (complex II, CII), ubiquinol-cytochrome c oxidoreductase (cytochrome b-c1 complex, complex III, CIII) and cytochrome c oxidase (complex IV, CIV), that cooperate to transfer electrons derived from NADH and succinate to molecular oxygen, creating an electrochemical gradient over the inner membrane that drives transmembrane transport and the ATP synthase. Cytochrome c oxidase is the component of the respiratory chain that catalyzes the reduction of oxygen to water. Electrons originating from reduced cytochrome c in the intermembrane space (IMS) are transferred via the dinuclear copper A center (CU(A)) of subunit 2 and heme A of subunit 1 to the active site in subunit 1, a binuclear center (BNC) formed by heme A3 and copper B (CU(B)). The BNC reduces molecular oxygen to 2 water molecules using 4 electrons from cytochrome c in the IMS and 4 protons from the mitochondrial matrix. The chain is Cytochrome c oxidase subunit 2 (MT-CO2) from Canis lupus familiaris (Dog).